Here is a 612-residue protein sequence, read N- to C-terminus: BTB/POZ domain-containing protein 9 (612 aa).

Residues 36 to 104 (GDVTFVVEKK…IYTGRATLTD (69 aa)) enclose the BTB domain. In terms of domain architecture, BACK spans 142–240 (VCMTFDVASL…SLTELLNVVR (99 aa)). The segment at 559–612 (QQSTQKEDSSEEPGTGDLSTPSQQLDPHAPRAPSASSLPPSPGPNLHSPNQQNQ) is disordered. Over residues 589–612 (RAPSASSLPPSPGPNLHSPNQQNQ) the composition is skewed to low complexity.

As to expression, detected throughout the gray matter of the spinal cord including the motor neurons (at protein level). In the brain, detected in the neurons of the hippocampus and in the Purkinje cells of the cerebellum (at protein level). Also detected in the terospenial cortex, bed nucleus of the stria terminalis (BST) and the ventrolateral thalamus (VL) (at protein level).

This Rattus norvegicus (Rat) protein is BTB/POZ domain-containing protein 9 (Btbd9).